The primary structure comprises 239 residues: Ribonuclease PH (239 aa).

Residues arginine 87 and 125-127 (GTR) each bind phosphate.

This sequence belongs to the RNase PH family. Homohexameric ring arranged as a trimer of dimers.

It catalyses the reaction tRNA(n+1) + phosphate = tRNA(n) + a ribonucleoside 5'-diphosphate. Its function is as follows. Phosphorolytic 3'-5' exoribonuclease that plays an important role in tRNA 3'-end maturation. Removes nucleotide residues following the 3'-CCA terminus of tRNAs; can also add nucleotides to the ends of RNA molecules by using nucleoside diphosphates as substrates, but this may not be physiologically important. Probably plays a role in initiation of 16S rRNA degradation (leading to ribosome degradation) during starvation. The chain is Ribonuclease PH from Dehalococcoides mccartyi (strain ATCC BAA-2266 / KCTC 15142 / 195) (Dehalococcoides ethenogenes (strain 195)).